A 1355-amino-acid chain; its full sequence is NACHT, LRR and PYD domains-containing protein 1 homolog (1355 aa).

Residues 257 to 458 (KTVILCGDSG…SVPLLCWMVC (202 aa)) enclose the NACHT domain. 263 to 270 (GDSGRGKS) contacts ATP. Residues 977–1109 (DSDQWVQVEP…FHAKILQPMF (133 aa)) form a ZU5 region. The 276-residue stretch at 977–1252 (DSDQWVQVEP…NKTESDLFQS (276 aa)) folds into the FIIND domain. The UPA stretch occupies residues 1110–1252 (SPKTVLVKLG…NKTESDLFQS (143 aa)). A CARD domain is found at 1278–1354 (LIKSVENVDT…NLLNHLPSSD (77 aa)).

Belongs to the NLRP family. Interacts with the C-terminal part of nlrp1 (NACHT, LRR and PYD domains-containing protein 1, C-terminus) in absence of pathogens and other damage-associated signals. As to quaternary structure, interacts with the N-terminal part of nlrp1 (NACHT, LRR and PYD domains-containing protein 1, N-terminus) in absence of pathogens and other damage-associated signals. Homomultimer; forms the nlrp1 inflammasome polymeric complex, a filament composed of homopolymers of this form in response to pathogens and other damage-associated signals. The nlrp1 inflammasome polymeric complex associates with pycard/asc. Interacts (via CARD domain) with pycard/asc (via CARD domain); leading to pro-inflammatory caspases (caspa and/or caspb) recruitment. Pro-caspase-a and pro-caspase-b filament formation increases local enzyme concentration, resulting in trans-autocleavage and activation. Active caspa and caspb then processes il1b and il18 precursors, leading to the release of mature cytokines in the extracellular milieu and inflammatory response. Post-translationally, autocatalytically cleaved. Autocatalytic cleavage in FIIND region occurs constitutively, prior to activation signals, and is required for inflammasome activity (IL1B release), possibly by facilitating pro-inflammatory caspases (caspa and/or caspb) binding. Both N- and C-terminal parts remain associated non-covalently. In terms of processing, ubiquitinated in response to pathogen-associated signals, leading to its degradation by the proteasome and subsequent release of the cleaved C-terminal part of the protein (NACHT, LRR and PYD domains-containing protein 1, C-terminus), which polymerizes and forms the nlrp1 inflammasome. Expressed in adult spleen, head kidney, gill and skin and also in the embryo.

The protein resides in the cytoplasm. The protein localises to the inflammasome. Its activity is regulated as follows. nlrp1 inflammasome is activated by pathogens and other damage-associated signals: activation promotes ubiquitination and degradation of the N-terminal part, releasing the cleaved C-terminal part of the protein (NACHT, LRR and PYD domains-containing protein 1, C-terminus), which polymerizes and forms the nlrp1 inflammasome. Functionally, acts as the sensor component of the nlrp1 inflammasome, which mediates inflammasome activation in response to various pathogen-associated signals, leading to subsequent pyroptosis. Inflammasomes are supramolecular complexes that assemble in the cytosol in response to pathogens and other damage-associated signals and play critical roles in innate immunity and inflammation. Acts as a recognition receptor (PRR): recognizes specific pathogens and other damage-associated signals, and mediates the formation of the inflammasome polymeric complex. In response to pathogen-associated signals, the N-terminal part of nlrp1 is degraded by the proteasome, releasing the cleaved C-terminal part of the protein (NACHT, LRR and PYD domains-containing protein 1, C-terminus), which polymerizes to initiate the formation of the inflammasome complex: the inflammasome recruits and activate pro-inflammatory caspases (caspa and/or caspb), leading to pyroptosis. Its function is as follows. Constitutes the precursor of the nlrp1 inflammasome, which mediates autoproteolytic processing within the FIIND domain to generate the N-terminal and C-terminal parts, which are associated non-covalently in absence of pathogens and other damage-associated signals. Regulatory part that prevents formation of the nlrp1 inflammasome: in absence of pathogens and other damage-associated signals, interacts with the C-terminal part of nlrp1 (NACHT, LRR and PYD domains-containing protein 1, C-terminus), preventing activation of the nlrp1 inflammasome. In response to pathogen-associated signals, this part is ubiquitinated and degraded by the proteasome, releasing the cleaved C-terminal part of the protein, which polymerizes and forms the nlrp1 inflammasome. In terms of biological role, constitutes the active part of the nlrp1 inflammasome. In absence of pathogens and other damage-associated signals, interacts with the N-terminal part of nlrp1 (NACHT, LRR and PYD domains-containing protein 1, N-terminus), preventing activation of the nlrp1 inflammasome. In response to pathogen-associated signals, the N-terminal part of nlrp1 is degraded by the proteasome, releasing this form, which polymerizes to form the nlrp1 inflammasome complex: the nlrp1 inflammasome complex then directly recruits and activates pro-inflammatory caspases (caspa and/or caspb) activation, leading to subsequent pyroptosis. In Danio rerio (Zebrafish), this protein is NACHT, LRR and PYD domains-containing protein 1 homolog.